Consider the following 92-residue polypeptide: Probable acyl carrier protein (92 aa).

Residues 11 to 92 form the Carrier domain; it reads QVTFEELSAL…QVNATLRTAV (82 aa). Position 49 is an O-(pantetheine 4'-phosphoryl)serine (S49).

4'-phosphopantetheine is transferred from CoA to a specific serine of the apo-ACP-like protein.

Its function is as follows. Involved in developmentally regulated synthesis of a compound biosynthetically related to polyketide antibiotics which is essential for spore color in Streptomyces halstedii. This Streptomyces halstedii protein is Probable acyl carrier protein (sch3).